A 313-amino-acid chain; its full sequence is Porphobilinogen deaminase (313 aa).

Residue C242 is modified to S-(dipyrrolylmethanemethyl)cysteine.

This sequence belongs to the HMBS family. In terms of assembly, monomer. The cofactor is dipyrromethane.

It catalyses the reaction 4 porphobilinogen + H2O = hydroxymethylbilane + 4 NH4(+). It functions in the pathway porphyrin-containing compound metabolism; protoporphyrin-IX biosynthesis; coproporphyrinogen-III from 5-aminolevulinate: step 2/4. In terms of biological role, tetrapolymerization of the monopyrrole PBG into the hydroxymethylbilane pre-uroporphyrinogen in several discrete steps. This is Porphobilinogen deaminase from Pseudomonas fluorescens (strain Pf0-1).